We begin with the raw amino-acid sequence, 475 residues long: Actin-related protein 10 (475 aa).

The protein belongs to the actin family.

It localises to the cytoplasm. Its subcellular location is the cytoskeleton. In Dictyostelium discoideum (Social amoeba), this protein is Actin-related protein 10.